A 376-amino-acid chain; its full sequence is Chaperone protein DnaJ (376 aa).

The region spanning 5 to 70 (DYYEVLGVAR…NKRRAYDAHG (66 aa)) is the J domain. The segment at 132 to 209 (GIERRIEIPT…CHGAGRVEEN (78 aa)) adopts a CR-type zinc-finger fold. Zn(2+) contacts are provided by Cys-145, Cys-148, Cys-161, Cys-164, Cys-183, Cys-186, Cys-197, and Cys-200. CXXCXGXG motif repeat units follow at residues 145 to 152 (CVSCHGSG), 161 to 168 (CGTCHGRG), 183 to 190 (CPHCDGRG), and 197 to 204 (CKTCHGAG).

It belongs to the DnaJ family. As to quaternary structure, homodimer. The cofactor is Zn(2+).

It localises to the cytoplasm. Functionally, participates actively in the response to hyperosmotic and heat shock by preventing the aggregation of stress-denatured proteins and by disaggregating proteins, also in an autonomous, DnaK-independent fashion. Unfolded proteins bind initially to DnaJ; upon interaction with the DnaJ-bound protein, DnaK hydrolyzes its bound ATP, resulting in the formation of a stable complex. GrpE releases ADP from DnaK; ATP binding to DnaK triggers the release of the substrate protein, thus completing the reaction cycle. Several rounds of ATP-dependent interactions between DnaJ, DnaK and GrpE are required for fully efficient folding. Also involved, together with DnaK and GrpE, in the DNA replication of plasmids through activation of initiation proteins. In Xanthomonas oryzae pv. oryzae (strain PXO99A), this protein is Chaperone protein DnaJ.